A 94-amino-acid chain; its full sequence is NADH-ubiquinone oxidoreductase 10.5 kDa subunit (94 aa).

It belongs to the complex I NDUFA2 subunit family. As to quaternary structure, complex I is composed of about 40 different subunits.

Its subcellular location is the mitochondrion inner membrane. Its function is as follows. Accessory subunit of the mitochondrial membrane respiratory chain NADH dehydrogenase (Complex I), that is believed not to be involved in catalysis. Complex I functions in the transfer of electrons from NADH to the respiratory chain. The immediate electron acceptor for the enzyme is believed to be ubiquinone. This is NADH-ubiquinone oxidoreductase 10.5 kDa subunit (nuo-10.5) from Neurospora crassa (strain ATCC 24698 / 74-OR23-1A / CBS 708.71 / DSM 1257 / FGSC 987).